Here is a 249-residue protein sequence, read N- to C-terminus: Putative nicotinamide mononucleotide adenylyltransferase (249 aa).

NAD(+) is bound by residues Ser40 and Phe41. His48 is a binding site for ATP. NAD(+)-binding residues include Thr97, Gly129, Asp131, Arg165, and Asn206. ATP is bound at residue 214–217 (TRAR).

This sequence belongs to the eukaryotic NMN adenylyltransferase family. POF1 subfamily.

Its subcellular location is the cytoplasm. It localises to the nucleus. The enzyme catalyses beta-nicotinamide D-ribonucleotide + ATP + H(+) = diphosphate + NAD(+). It participates in cofactor biosynthesis; NAD(+) biosynthesis; NAD(+) from nicotinamide D-ribonucleotide: step 1/1. Functionally, catalyzes the formation of NAD(+) from nicotinamide mononucleotide (NMN) and ATP. Involved in the salvage pathway for NAD(+) biosynthesis via NMN. The polypeptide is Putative nicotinamide mononucleotide adenylyltransferase (Schizosaccharomyces pombe (strain 972 / ATCC 24843) (Fission yeast)).